The following is a 197-amino-acid chain: C-type lectin domain family 3 member A (197 aa).

The N-terminal stretch at 1–24 is a signal peptide; it reads MAKNGLVIYILVITLLLDQTSCHA. 3 disulfide bridges follow: C68–C78, C95–C191, and C167–C183. One can recognise a C-type lectin domain in the interval 74–192; it reads FHKKCYLAAE…CHSSKRYICE (119 aa).

It is found in the secreted. Promotes cell adhesion to laminin and fibronectin. This is C-type lectin domain family 3 member A (CLEC3A) from Bos taurus (Bovine).